The following is a 397-amino-acid chain: Succinate--CoA ligase [ADP-forming] subunit beta (397 aa).

The ATP-grasp domain occupies 9–254; sequence KALLAQYGAP…ETEEDPKELA (246 aa). ATP contacts are provided by residues Lys46, 53–55, Glu109, Ser112, and Glu117; that span reads GRG. Mg(2+) is bound by residues Asn209 and Asp223. Substrate contacts are provided by residues Asn274 and 331 to 333; that span reads GIM.

This sequence belongs to the succinate/malate CoA ligase beta subunit family. As to quaternary structure, heterotetramer of two alpha and two beta subunits. It depends on Mg(2+) as a cofactor.

It catalyses the reaction succinate + ATP + CoA = succinyl-CoA + ADP + phosphate. The enzyme catalyses GTP + succinate + CoA = succinyl-CoA + GDP + phosphate. It functions in the pathway carbohydrate metabolism; tricarboxylic acid cycle; succinate from succinyl-CoA (ligase route): step 1/1. Succinyl-CoA synthetase functions in the citric acid cycle (TCA), coupling the hydrolysis of succinyl-CoA to the synthesis of either ATP or GTP and thus represents the only step of substrate-level phosphorylation in the TCA. The beta subunit provides nucleotide specificity of the enzyme and binds the substrate succinate, while the binding sites for coenzyme A and phosphate are found in the alpha subunit. The polypeptide is Succinate--CoA ligase [ADP-forming] subunit beta (Jannaschia sp. (strain CCS1)).